The following is a 289-amino-acid chain: Oxaloacetate decarboxylase (289 aa).

Serine 47 is a binding site for substrate. Aspartate 85 provides a ligand contact to Mg(2+). Substrate contacts are provided by arginine 156 and histidine 232.

This sequence belongs to the isocitrate lyase/PEP mutase superfamily. Oxaloacetate decarboxylase family. As to quaternary structure, homotetramer; dimer of dimers. Requires Mg(2+) as cofactor.

It carries out the reaction oxaloacetate + H(+) = pyruvate + CO2. Catalyzes the decarboxylation of oxaloacetate into pyruvate. Seems to play a role in maintaining cellular concentrations of bicarbonate and pyruvate. This chain is Oxaloacetate decarboxylase, found in Rhodopseudomonas palustris (strain BisB5).